Consider the following 126-residue polypeptide: FSYLPPLTDEQISKQVDYILANSWTPCLEFAASDQAYAGNDNCIRMGPVASTYQDNRYWTMWKLPMFGCTDGSQVLSEIQACTKAFPDAYIRLVCFDANRQVQISGFLVHRPPSATDYRLPADRQV.

Belongs to the RuBisCO small chain family. In terms of assembly, heterohexadecamer of 8 large and 8 small subunits.

It localises to the plastid. The protein localises to the chloroplast. RuBisCO catalyzes two reactions: the carboxylation of D-ribulose 1,5-bisphosphate, the primary event in carbon dioxide fixation, as well as the oxidative fragmentation of the pentose substrate. Both reactions occur simultaneously and in competition at the same active site. Although the small subunit is not catalytic it is essential for maximal activity. The chain is Ribulose bisphosphate carboxylase small subunit, chloroplastic 1 from Acetabularia peniculus (Green alga).